A 538-amino-acid polypeptide reads, in one-letter code: Probable bifunctional riboflavin biosynthesis protein RIBA 1, chloroplastic (538 aa).

A compositionally biased stretch (polar residues) spans 1–16; the sequence is MSRLSSIYSQHRTSGL. The disordered stretch occupies residues 1 to 29; it reads MSRLSSIYSQHRTSGLRSDRSIMPNSTSN. The N-terminal 73 residues, 1 to 73, are a transit peptide targeting the chloroplast; that stretch reads MSRLSSIYSQ…NGQASPSKVV (73 aa). Positions 46–311 are DHBP synthase; it reads RNFHISHAVG…IADLIRYRRK (266 aa). D-ribulose 5-phosphate-binding positions include 134–135, Asp139, 249–253, and Glu273; these read RE and RAGHT. A Mg(2+)-binding site is contributed by Glu135. Mg(2+) is bound at residue His252. Residues 312–530 form a GTP cyclohydrolase II region; that stretch reads RDRLVERVCV…DGGIKKEQDQ (219 aa). 362–366 provides a ligand contact to GTP; that stretch reads RVHSE. Zn(2+) contacts are provided by Cys367, Cys378, and Cys380. Residues Gln383, 406–408, and Thr428 each bind GTP; that span reads EGR. Asp440 serves as the catalytic Proton acceptor; for GTP cyclohydrolase activity. Arg442 serves as the catalytic Nucleophile; for GTP cyclohydrolase activity. GTP-binding residues include Thr463 and Lys468. A disordered region spans residues 506 to 538; the sequence is HVYGTRPSGNTSTLADGGIKKEQDQIDSASEQE.

In the N-terminal section; belongs to the DHBP synthase family. The protein in the C-terminal section; belongs to the GTP cyclohydrolase II family. It depends on Mg(2+) as a cofactor. Mn(2+) serves as cofactor. Requires Zn(2+) as cofactor.

It localises to the plastid. Its subcellular location is the chloroplast. It carries out the reaction D-ribulose 5-phosphate = (2S)-2-hydroxy-3-oxobutyl phosphate + formate + H(+). The catalysed reaction is GTP + 4 H2O = 2,5-diamino-6-hydroxy-4-(5-phosphoribosylamino)-pyrimidine + formate + 2 phosphate + 3 H(+). The protein operates within cofactor biosynthesis; riboflavin biosynthesis; 2-hydroxy-3-oxobutyl phosphate from D-ribulose 5-phosphate: step 1/1. It participates in cofactor biosynthesis; riboflavin biosynthesis; 5-amino-6-(D-ribitylamino)uracil from GTP: step 1/4. In terms of biological role, involved in riboflavin biosynthesis. Catalyzes both the conversion of D-ribulose 5-phosphate to formate and 3,4-dihydroxy-2-butanone 4-phosphate and the conversion of GTP to 2,5-diamino-6-ribosylamino-4(3H)-pyrimidinone 5'-phosphate (DARP), formate and pyrophosphate. In Oryza sativa subsp. japonica (Rice), this protein is Probable bifunctional riboflavin biosynthesis protein RIBA 1, chloroplastic (RIBA1).